The sequence spans 198 residues: NAD(P)H dehydrogenase (quinone) (198 aa).

Positions 4–189 (ILVLYYSMYG…SIARYQGEYV (186 aa)) constitute a Flavodoxin-like domain. FMN-binding positions include 10–15 (SMYGHI) and 78–80 (TRF). Tyrosine 12 contributes to the NAD(+) binding site. Residue tryptophan 98 participates in substrate binding. FMN contacts are provided by residues 113 to 118 (STGTGG) and histidine 133.

Belongs to the WrbA family. FMN serves as cofactor.

It catalyses the reaction a quinone + NADH + H(+) = a quinol + NAD(+). It carries out the reaction a quinone + NADPH + H(+) = a quinol + NADP(+). This is NAD(P)H dehydrogenase (quinone) from Salmonella paratyphi B (strain ATCC BAA-1250 / SPB7).